The sequence spans 499 residues: Kynurenine 3-monooxygenase 3 (499 aa).

Belongs to the aromatic-ring hydroxylase family. KMO subfamily. FAD is required as a cofactor.

It localises to the mitochondrion outer membrane. It carries out the reaction L-kynurenine + NADPH + O2 + H(+) = 3-hydroxy-L-kynurenine + NADP(+) + H2O. It participates in cofactor biosynthesis; NAD(+) biosynthesis; quinolinate from L-kynurenine: step 1/3. Its function is as follows. Catalyzes the hydroxylation of L-kynurenine (L-Kyn) to form 3-hydroxy-L-kynurenine (L-3OHKyn). Required for synthesis of quinolinic acid. This is Kynurenine 3-monooxygenase 3 (bna4-3) from Aspergillus niger (strain ATCC MYA-4892 / CBS 513.88 / FGSC A1513).